A 270-amino-acid chain; its full sequence is 4-hydroxy-tetrahydrodipicolinate reductase (270 aa).

NAD(+) is bound by residues 9–14 (GAGGRM) and E35. R36 contributes to the NADP(+) binding site. Residues 99-101 (GTT) and 123-126 (ASNF) each bind NAD(+). The Proton donor/acceptor role is filled by H156. H157 is a (S)-2,3,4,5-tetrahydrodipicolinate binding site. K160 serves as the catalytic Proton donor. A (S)-2,3,4,5-tetrahydrodipicolinate-binding site is contributed by 166–167 (GT).

The protein belongs to the DapB family.

It localises to the cytoplasm. It carries out the reaction (S)-2,3,4,5-tetrahydrodipicolinate + NAD(+) + H2O = (2S,4S)-4-hydroxy-2,3,4,5-tetrahydrodipicolinate + NADH + H(+). It catalyses the reaction (S)-2,3,4,5-tetrahydrodipicolinate + NADP(+) + H2O = (2S,4S)-4-hydroxy-2,3,4,5-tetrahydrodipicolinate + NADPH + H(+). It participates in amino-acid biosynthesis; L-lysine biosynthesis via DAP pathway; (S)-tetrahydrodipicolinate from L-aspartate: step 4/4. Functionally, catalyzes the conversion of 4-hydroxy-tetrahydrodipicolinate (HTPA) to tetrahydrodipicolinate. This Pasteurella multocida (strain Pm70) protein is 4-hydroxy-tetrahydrodipicolinate reductase.